The chain runs to 333 residues: Ribosome biogenesis regulatory protein homolog (333 aa).

Disordered stretches follow at residues 227 to 248 and 271 to 333; these read KANV…VSGE and AAAV…ARKG. A compositionally biased stretch (basic and acidic residues) spans 278–295; that stretch reads LREKKEKSERKGAKDQTR. The span at 324 to 333 shows a compositional bias: basic residues; sequence GANKAKARKG.

This sequence belongs to the RRS1 family.

The protein resides in the nucleus. Its subcellular location is the nucleolus. In terms of biological role, involved in ribosomal large subunit assembly. The chain is Ribosome biogenesis regulatory protein homolog from Caenorhabditis elegans.